The chain runs to 509 residues: MISTDSLARIALDLQLGISHQDRFHRLIQSVRSLLHSDASALLRYEGGQFIPLAIDGLMQDVLGRRFALADHPRMEAIARAGDVVRFPADSNLPDPYDGLIPDHDDFRVHACVGLPLFSDQTLIGALTIDGMNPTQFDGISDEELRLVGALAAAALSNALLLERLARQSSEPLAPSTQNGPGRAEMIGRSPAMDRLRHEINVVASSELNVLILGETGVGKELIAKAVHQGSPRASAPLVYLNCAALPESVAESELFGHVKGAFTGAIHNRAGKFELADKGTLFLDEIGELSLSLQAKLLRVLQYGDLQRIGDDTPLKVNVRILAATNRDLKQAVVEGQFRSDLYHRLSVFPIHAPALRERPDDIPLLAGYFCERCRVSLGLERLRIEPRALQLLGSYDWPGNVRELEHAIHRAAVLARAEQGSQAPALECHHFNLAAAGAPSSSRIPVEQVAQQMTAGMGLRTATDAFQLQLIEQTLAAQHGNWAATARALEMDGGNLHRLARRLGLKP.

Asp-56 carries the 4-aspartylphosphate modification. Positions 186–415 (MIGRSPAMDR…LEHAIHRAAV (230 aa)) constitute a Sigma-54 factor interaction domain. Residues 214-221 (GETGVGKE) and 277-286 (ADKGTLFLDE) contribute to the ATP site. Residues 484–503 (WAATARALEMDGGNLHRLAR) constitute a DNA-binding region (H-T-H motif).

The protein operates within nitrogen metabolism; nitric oxide reduction. Functionally, required for the expression of anaerobic nitric oxide (NO) reductase, acts as a transcriptional activator for at least the norVW operon. Activation also requires sigma-54. This chain is Anaerobic nitric oxide reductase transcription regulator NorR, found in Aeromonas salmonicida (strain A449).